A 174-amino-acid chain; its full sequence is Peptide methionine sulfoxide reductase MsrA (174 aa).

Cysteine 10 is an active-site residue.

Belongs to the MsrA Met sulfoxide reductase family.

The enzyme catalyses L-methionyl-[protein] + [thioredoxin]-disulfide + H2O = L-methionyl-(S)-S-oxide-[protein] + [thioredoxin]-dithiol. It carries out the reaction [thioredoxin]-disulfide + L-methionine + H2O = L-methionine (S)-S-oxide + [thioredoxin]-dithiol. Has an important function as a repair enzyme for proteins that have been inactivated by oxidation. Catalyzes the reversible oxidation-reduction of methionine sulfoxide in proteins to methionine. In Acinetobacter baumannii (strain SDF), this protein is Peptide methionine sulfoxide reductase MsrA.